Consider the following 127-residue polypeptide: PRA1 family protein C (127 aa).

3 consecutive transmembrane segments (helical) span residues 15–35 (IFIS…LIVA), 53–73 (VIDD…IFLL), and 76–96 (VSRG…VHGM).

It belongs to the PRA1 family.

The protein resides in the endoplasmic reticulum membrane. In terms of biological role, may be involved in both secretory and endocytic intracellular trafficking in the endosomal/prevacuolar compartments. In Arabidopsis thaliana (Mouse-ear cress), this protein is PRA1 family protein C (PRA1C).